Reading from the N-terminus, the 250-residue chain is Octanoyltransferase (250 aa).

The BPL/LPL catalytic domain occupies 44-224 (GAGSDRLLLL…AVVQALNGDL (181 aa)). Residues 82–89 (RGGKITWH), 154–156 (AIG), and 167–169 (GIS) each bind substrate. Cys-185 functions as the Acyl-thioester intermediate in the catalytic mechanism. The interval 224–250 (LPVRDHDLPRPGTTPAAPNSTRVRSMT) is disordered. Polar residues predominate over residues 239-250 (AAPNSTRVRSMT).

This sequence belongs to the LipB family.

The protein localises to the cytoplasm. It catalyses the reaction octanoyl-[ACP] + L-lysyl-[protein] = N(6)-octanoyl-L-lysyl-[protein] + holo-[ACP] + H(+). It functions in the pathway protein modification; protein lipoylation via endogenous pathway; protein N(6)-(lipoyl)lysine from octanoyl-[acyl-carrier-protein]: step 1/2. Functionally, catalyzes the transfer of endogenously produced octanoic acid from octanoyl-acyl-carrier-protein onto the lipoyl domains of lipoate-dependent enzymes. Lipoyl-ACP can also act as a substrate although octanoyl-ACP is likely to be the physiological substrate. The sequence is that of Octanoyltransferase from Nocardia farcinica (strain IFM 10152).